We begin with the raw amino-acid sequence, 714 residues long: BBSome complex member bbs-2 (714 aa).

2 coiled-coil regions span residues 332–361 and 597–627; these read IREF…VEKD and MTEV…DSIA.

Part of BBSome complex, that contains at least bbs-1, bbs-2, bbs-4, bbs-5, osm-12, bbs-8/ttc-8 and bbs-9. In terms of tissue distribution, expressed in ciliated cells including amphid and both inner and outer labial neurons of the head and in both phasmid neurons PHA and PHB in the tail at larval stages L1 and L2.

It localises to the cell projection. Its subcellular location is the cilium. It is found in the cytoplasm. The protein resides in the cytoskeleton. The protein localises to the cilium basal body. It localises to the cilium axoneme. Functionally, component of the BBSome complex. The BBSome complex is thought to function as a coat complex required for sorting of specific membrane proteins to the primary cilia. The BBSome complex is required for ciliogenesis but is dispensable for centriolar satellite function. Required for proper BBSome complex assembly and its ciliary localization. Required for cilia biogenesis and both the assembly and movement of intraflagellar transport proteins along the ciliary axoneme. In Caenorhabditis elegans, this protein is BBSome complex member bbs-2.